We begin with the raw amino-acid sequence, 169 residues long: Spore protein SP21 (169 aa).

Disordered stretches follow at residues 1 to 21 and 150 to 169; these read MADLSVRRGTGSTPQRTREWD and QPKRIQVASSGTEQKEHIKA. The 113-residue stretch at 47–159 folds into the sHSP domain; sequence QGPPAFVPAF…QPKRIQVASS (113 aa).

It belongs to the small heat shock protein (HSP20) family.

May stabilize cellular components during stress and spore formation. The chain is Spore protein SP21 (hspA) from Stigmatella aurantiaca (strain DW4/3-1).